Here is a 420-residue protein sequence, read N- to C-terminus: Glutamate-1-semialdehyde 2,1-aminomutase (420 aa).

Position 259 is an N6-(pyridoxal phosphate)lysine (Lys-259).

It belongs to the class-III pyridoxal-phosphate-dependent aminotransferase family. HemL subfamily. As to quaternary structure, homodimer. The cofactor is pyridoxal 5'-phosphate.

It is found in the cytoplasm. It carries out the reaction (S)-4-amino-5-oxopentanoate = 5-aminolevulinate. It participates in porphyrin-containing compound metabolism; protoporphyrin-IX biosynthesis; 5-aminolevulinate from L-glutamyl-tRNA(Glu): step 2/2. This is Glutamate-1-semialdehyde 2,1-aminomutase from Nautilia profundicola (strain ATCC BAA-1463 / DSM 18972 / AmH).